Reading from the N-terminus, the 735-residue chain is Zinc finger CCCH domain-containing protein 14 (735 aa).

M1 is modified (N-acetylmethionine). The segment at 78–153 (TEPSSLKSPD…RHSYDDGAST (76 aa)) is disordered. At S85 the chain carries Phosphoserine. Residues K99, K139, K175, and K198 each participate in a glycyl lysine isopeptide (Lys-Gly) (interchain with G-Cter in SUMO2) cross-link. A compositionally biased stretch (polar residues) spans 131–144 (VSTSSQEQKSTNVR). S240 carries the post-translational modification Phosphoserine. Glycyl lysine isopeptide (Lys-Gly) (interchain with G-Cter in SUMO2) cross-links involve residues K245, K283, and K295. The disordered stretch occupies residues 308–351 (FSHDGEEEEEDEDYGTRIGSLSSSVSVPAKPERRPSLPPSKQAN). Phosphoserine is present on residues S309, S327, and S343. K357 bears the N6-acetyllysine; alternate mark. Residue K357 forms a Glycyl lysine isopeptide (Lys-Gly) (interchain with G-Cter in SUMO2); alternate linkage. K378 participates in a covalent cross-link: Glycyl lysine isopeptide (Lys-Gly) (interchain with G-Cter in SUMO2). Phosphoserine is present on residues S390 and S409. Residues 399 to 431 (VQGQNRAPRISPPVKEEEAKGDNTGKSQGTQQR) are disordered. Residues 412–421 (VKEEEAKGDN) are compositionally biased toward basic and acidic residues. A Glycyl lysine isopeptide (Lys-Gly) (interchain with G-Cter in SUMO2) cross-link involves residue K413. Residues 422–431 (TGKSQGTQQR) are compositionally biased toward polar residues. Residue K489 forms a Glycyl lysine isopeptide (Lys-Gly) (interchain with G-Cter in SUMO2) linkage. Phosphoserine occurs at positions 498, 515, 527, and 620. C3H1-type zinc fingers lie at residues 595 to 620 (EKLLERCKYWPACKNGDECVYHHPIS), 621 to 640 (PCKAFPNCKFAEKCLFVHPN), 641 to 656 (CKYDTKCTKADCPFTH), 681 to 698 (CRYFPACKKMECPFYHPK), and 700 to 718 (CRFNTQCTRPDCTFYHPTI).

The protein belongs to the ZC3H14 family. In terms of assembly, homodimer; facilitating circular RNAs (circRNAs) formation. Associates with the spliceosome. Interacts with HOOK2. Interacts with ZFC3H1 in a RNase-sensitive manner. As to expression, expressed in hippocampal pyramidal neurons (at protein level). Expressed in kidney, liver, muscle, heart brain and testes. Expressed in hippocampal pyramidal neurons.

The protein resides in the nucleus speckle. Its function is as follows. RNA-binding protein involved in the biogenesis of circular RNAs (circRNAs), which are produced by back-splicing circularization of pre-mRNAs. Acts by binding to both exon-intron boundary and 3'-UTR of pre-mRNAs to promote circRNA biogenesis through dimerization and the association with the spliceosome. Required for spermatogenesis via involvement in circRNA biogenesis. Regulates the pre-mRNA processing of ATP5MC1; preventing its degradation. Also binds the poly(A) tail of mRNAs; controlling poly(A) length in neuronal cells. The chain is Zinc finger CCCH domain-containing protein 14 from Mus musculus (Mouse).